The sequence spans 354 residues: Peptide chain release factor 1 (354 aa).

N5-methylglutamine is present on Gln230.

The protein belongs to the prokaryotic/mitochondrial release factor family. Post-translationally, methylated by PrmC. Methylation increases the termination efficiency of RF1.

The protein localises to the cytoplasm. Functionally, peptide chain release factor 1 directs the termination of translation in response to the peptide chain termination codons UAG and UAA. This chain is Peptide chain release factor 1, found in Thermus thermophilus (strain ATCC BAA-163 / DSM 7039 / HB27).